The sequence spans 302 residues: Myeloid-associated differentiation marker-like protein 2 (302 aa).

MARVEL domains are found at residues 13-149 and 154-298; these read AIWS…AKPG and YMAT…RLRI. 7 helical membrane-spanning segments follow: residues 45-65, 87-107, 124-144, 158-178, 191-211, 225-245, and 273-293; these read AYGT…ILIV, AYAM…PMYF, LAVS…VFLT, ASGL…GALA, WCVA…ILNI, FVVI…VIWP, and LAVT…LIYT.

The protein belongs to the MAL family.

The protein resides in the membrane. In Xenopus laevis (African clawed frog), this protein is Myeloid-associated differentiation marker-like protein 2 (myadml2).